Consider the following 161-residue polypeptide: MADKRIRSDSSAAAVQAMKNAAVDTIDPPSHAGLEKKAEPFWHDNIRSKALDSWTPADLLAAVELANNQLYITVLRKDLRKEERIRGEERDEGLIKDLRKQIVELQRTILAQRRDLQIHSHATNGESRDQKKRNQNDRDARNTKNEHQDQDDNLIAFPKHG.

A helix-turn-helix (HTH) region spans residues 37–60; it reads KAEPFWHDNIRSKALDSWTPADLL. The stretch at 88-115 forms a coiled coil; it reads EERDEGLIKDLRKQIVELQRTILAQRRD. K96, K100, R107, R114, and R128 together coordinate DNA.

The protein belongs to the Hendrixvirinae small terminase family. As to quaternary structure, homononamer; forms a ring-like structure through which genomic DNA is translocated into the capsid. Interacts with the terminase small subunit; the active complex is composed of a pentamer ring of terminase large subunits and a nonamer ring of terminase small subunits. Binds a specific sequence on the viral genome. DNA transits through the central tunnel formed by the small subunit and sequence-specific recognition for packaging initiation and termination takes place as it emerges.

Its function is as follows. The terminase small subunit binds to the packaging initiation site and regulates the ATPase activity of the terminase large subunit. The terminase lies at a unique vertex of the procapsid and is composed of two subunits, a small terminase subunit involved in viral DNA recognition (packaging sequence), and a large terminase subunit possessing endonucleolytic and ATPase activities. Both terminase subunits heterooligomerize and are docked on the portal protein to form the packaging machine. Packaging initiates by TerS recognizing the packaging sequence in the viral DNA. The nuclease activity of TerL cuts the viral DNA and the terminase-DNA complex binds to the portal of a procapsid shell. DNA is translocated into the capsid, powered by the packaging ATPase in TerL, which continues until the next site is encountered at which point the motor stops and again cuts the DNA to release the nucleocapsid filled with a unit-length genome ('unit length' packaging). This is Terminase, small subunit (1) from Escherichia coli (Bacteriophage HK97).